The chain runs to 244 residues: ATP-dependent dethiobiotin synthetase BioD 1 (244 aa).

Residue 12-17 coordinates ATP; the sequence is NVGKTV. Thr16 is a binding site for Mg(2+). Lys37 is an active-site residue. An ATP-binding site is contributed by Asp68. Asp68 and Glu126 together coordinate Mg(2+). Residues 186–187, 215–217, and Glu222 contribute to the ATP site; these read NR and PYL.

The protein belongs to the dethiobiotin synthetase family. In terms of assembly, homodimer. Requires Mg(2+) as cofactor.

It is found in the cytoplasm. The enzyme catalyses (7R,8S)-7,8-diammoniononanoate + CO2 + ATP = (4R,5S)-dethiobiotin + ADP + phosphate + 3 H(+). It participates in cofactor biosynthesis; biotin biosynthesis; biotin from 7,8-diaminononanoate: step 1/2. Catalyzes a mechanistically unusual reaction, the ATP-dependent insertion of CO2 between the N7 and N8 nitrogen atoms of 7,8-diaminopelargonic acid (DAPA, also called 7,8-diammoniononanoate) to form a ureido ring. The protein is ATP-dependent dethiobiotin synthetase BioD 1 of Pasteurella multocida (strain Pm70).